Consider the following 95-residue polypeptide: MSEGKSVPDHDFEELILEVDVITGPLFPELEVRPLLVGGIGQSESNIIEEDLTGPGHEISGDFKRLRDLCSVIDNLSGQDDLIKAIDVVPHYVQF.

This is an uncharacterized protein from Human adenovirus B serotype 7 (HAdV-7).